The following is a 458-amino-acid chain: V-type ATP synthase beta chain (458 aa).

Belongs to the ATPase alpha/beta chains family.

Its function is as follows. Produces ATP from ADP in the presence of a proton gradient across the membrane. The V-type beta chain is a regulatory subunit. This chain is V-type ATP synthase beta chain, found in Fusobacterium nucleatum subsp. nucleatum (strain ATCC 25586 / DSM 15643 / BCRC 10681 / CIP 101130 / JCM 8532 / KCTC 2640 / LMG 13131 / VPI 4355).